Reading from the N-terminus, the 959-residue chain is Translation initiation factor IF-2 (959 aa).

Basic and acidic residues predominate over residues 1–10; sequence MSDKTNDDKT. The disordered stretch occupies residues 1-374; sequence MSDKTNDDKT…SQMQETREKI (374 aa). Polar residues predominate over residues 27–37; it reads EQSTVRQNFSH. 2 stretches are compositionally biased toward low complexity: residues 63 to 118 and 128 to 138; these read AAAA…VTKP and QRPGGQQAQRP. Basic and acidic residues-rich tracts occupy residues 154–225 and 232–241; these read SEMD…EAAK and ARSERRDDAR. Positions 246 to 284 are enriched in low complexity; that stretch reads GARPQQAGRPQGGRPQPAGRPQQGSPRPAPIIADAAPIA. The span at 318-333 shows a compositional bias: basic and acidic residues; the sequence is PEVRAPKVVKGEDDRR. The tr-type G domain occupies 457–626; sequence SRPPVVTIMG…LLQAEMLDLK (170 aa). The interval 466-473 is G1; the sequence is GHVDHGKT. 466–473 lines the GTP pocket; sequence GHVDHGKT. The segment at 491–495 is G2; that stretch reads GITQH. Residues 512-515 form a G3 region; it reads DTPG. GTP contacts are provided by residues 512-516 and 566-569; these read DTPGH and NKID. Residues 566 to 569 are G4; the sequence is NKID. The interval 602 to 604 is G5; sequence SAK.

The protein belongs to the TRAFAC class translation factor GTPase superfamily. Classic translation factor GTPase family. IF-2 subfamily.

The protein resides in the cytoplasm. One of the essential components for the initiation of protein synthesis. Protects formylmethionyl-tRNA from spontaneous hydrolysis and promotes its binding to the 30S ribosomal subunits. Also involved in the hydrolysis of GTP during the formation of the 70S ribosomal complex. In Brucella ovis (strain ATCC 25840 / 63/290 / NCTC 10512), this protein is Translation initiation factor IF-2.